Here is a 126-residue protein sequence, read N- to C-terminus: MIRTMLQGKLHRVKVTQADLHYEGSCAIDQDFLDAAGILENEAIDIWNVTNGKRFSTYAIAAERGSRIISVNGAAAHCAAVGDIVIIASFVTMSDEEARRWQPNVAYFEGDNEMKRTAKAIPVQVA.

S25 acts as the Schiff-base intermediate with substrate; via pyruvic acid in catalysis. S25 carries the pyruvic acid (Ser) modification. T57 contacts substrate. The active-site Proton donor is the Y58. 73 to 75 provides a ligand contact to substrate; sequence GAA.

It belongs to the PanD family. Heterooctamer of four alpha and four beta subunits. The cofactor is pyruvate. Is synthesized initially as an inactive proenzyme, which is activated by self-cleavage at a specific serine bond to produce a beta-subunit with a hydroxyl group at its C-terminus and an alpha-subunit with a pyruvoyl group at its N-terminus.

The protein resides in the cytoplasm. The enzyme catalyses L-aspartate + H(+) = beta-alanine + CO2. It functions in the pathway cofactor biosynthesis; (R)-pantothenate biosynthesis; beta-alanine from L-aspartate: step 1/1. Functionally, catalyzes the pyruvoyl-dependent decarboxylation of aspartate to produce beta-alanine. The polypeptide is Aspartate 1-decarboxylase (Citrobacter koseri (strain ATCC BAA-895 / CDC 4225-83 / SGSC4696)).